The sequence spans 536 residues: CTP synthase (536 aa).

The amidoligase domain stretch occupies residues 1–267 (MSKFVFVTGG…CKETLKYLEL (267 aa)). Residue S13 coordinates CTP. S13 lines the UTP pocket. ATP is bound by residues 14 to 19 (SIGKGI) and D71. The Mg(2+) site is built by D71 and E141. CTP contacts are provided by residues 148 to 150 (DIE), 188 to 193 (KTKPTQ), and K224. Residues 188–193 (KTKPTQ) and K224 each bind UTP. The region spanning 292-534 (KVALVGKYIE…IKASQEKLTQ (243 aa)) is the Glutamine amidotransferase type-1 domain. G354 is an L-glutamine binding site. The active-site Nucleophile; for glutamine hydrolysis is the C381. L-glutamine contacts are provided by residues 382 to 385 (LGMQ), E405, and R462. Active-site residues include H507 and E509.

It belongs to the CTP synthase family. Homotetramer.

It carries out the reaction UTP + L-glutamine + ATP + H2O = CTP + L-glutamate + ADP + phosphate + 2 H(+). It catalyses the reaction L-glutamine + H2O = L-glutamate + NH4(+). The catalysed reaction is UTP + NH4(+) + ATP = CTP + ADP + phosphate + 2 H(+). The protein operates within pyrimidine metabolism; CTP biosynthesis via de novo pathway; CTP from UDP: step 2/2. Its activity is regulated as follows. Allosterically activated by GTP, when glutamine is the substrate; GTP has no effect on the reaction when ammonia is the substrate. The allosteric effector GTP functions by stabilizing the protein conformation that binds the tetrahedral intermediate(s) formed during glutamine hydrolysis. Inhibited by the product CTP, via allosteric rather than competitive inhibition. Catalyzes the ATP-dependent amination of UTP to CTP with either L-glutamine or ammonia as the source of nitrogen. Regulates intracellular CTP levels through interactions with the four ribonucleotide triphosphates. The sequence is that of CTP synthase from Prochlorococcus marinus (strain MIT 9215).